Reading from the N-terminus, the 44-residue chain is MSHTMGKNNREAKEKKGQPEPLSGSHKVKNRNHSRQKHHAHHDM.

Residues 1–44 (MSHTMGKNNREAKEKKGQPEPLSGSHKVKNRNHSRQKHHAHHDM) are disordered. A compositionally biased stretch (basic and acidic residues) spans 8–18 (NNREAKEKKGQ). A compositionally biased stretch (basic residues) spans 26 to 44 (HKVKNRNHSRQKHHAHHDM).

It belongs to the SspP family.

Its subcellular location is the spore core. The protein is Small, acid-soluble spore protein P of Bacillus cereus (strain ATCC 14579 / DSM 31 / CCUG 7414 / JCM 2152 / NBRC 15305 / NCIMB 9373 / NCTC 2599 / NRRL B-3711).